The chain runs to 193 residues: Xanthine phosphoribosyltransferase (193 aa).

Residues Leu20 and Thr27 each contribute to the xanthine site. 128–132 (ANGQA) lines the 5-phospho-alpha-D-ribose 1-diphosphate pocket. Lys156 is a xanthine binding site.

This sequence belongs to the purine/pyrimidine phosphoribosyltransferase family. Xpt subfamily. As to quaternary structure, homodimer.

The protein localises to the cytoplasm. It carries out the reaction XMP + diphosphate = xanthine + 5-phospho-alpha-D-ribose 1-diphosphate. It participates in purine metabolism; XMP biosynthesis via salvage pathway; XMP from xanthine: step 1/1. Functionally, converts the preformed base xanthine, a product of nucleic acid breakdown, to xanthosine 5'-monophosphate (XMP), so it can be reused for RNA or DNA synthesis. This chain is Xanthine phosphoribosyltransferase, found in Streptococcus pneumoniae (strain CGSP14).